Reading from the N-terminus, the 481-residue chain is Zinc metalloproteinase/disintegrin (481 aa).

The N-terminal stretch at M1–S20 is a signal peptide. The propeptide occupies I21 to E190. The region spanning R197–P392 is the Peptidase M12B domain. 3 disulfide bridges follow: C308–C387, C349–C371, and C351–C354. Residue H333 participates in Zn(2+) binding. The active site involves E334. H337 and H343 together coordinate Zn(2+). Residues L393–L408 constitute a propeptide that is removed on maturation. Positions T400–S481 constitute a Disintegrin domain. 6 disulfide bridges follow: C414/C429, C416/C424, C423/C446, C437/C443, C442/C467, and C455/C474. The short motif at R459–D461 is the Cell attachment site element.

The protein belongs to the venom metalloproteinase (M12B) family. P-II subfamily. P-IIa sub-subfamily. As to quaternary structure, monomer. Requires Zn(2+) as cofactor. In terms of tissue distribution, expressed by the venom gland.

It localises to the secreted. Functionally, impairs hemostasis in the envenomed animal. Inhibits platelet aggregation induced by ADP, thrombin, platelet-activating factor and collagen. Acts by inhibiting fibrinogen interaction with platelet receptors GPIIb/GPIIIa (ITGA2B/ITGB3). The polypeptide is Zinc metalloproteinase/disintegrin (Protobothrops elegans (Elegant pitviper)).